The sequence spans 665 residues: UvrABC system protein C (665 aa).

The 80-residue stretch at 16–95 (ESPGVYRFRD…IKQYDPRFNV (80 aa)) folds into the GIY-YIG domain. A UVR domain is found at 208–243 (DLMVRRLEREMADASAELEFERAARLRDDLAALRRA). The tract at residues 470 to 507 (EAGVESAGDPATPAGPASTGPGVPDEPRVGTLVDPTTG) is disordered. Low complexity predominate over residues 475–491 (SAGDPATPAGPASTGPG).

The protein belongs to the UvrC family. In terms of assembly, interacts with UvrB in an incision complex.

It is found in the cytoplasm. Its function is as follows. The UvrABC repair system catalyzes the recognition and processing of DNA lesions. UvrC both incises the 5' and 3' sides of the lesion. The N-terminal half is responsible for the 3' incision and the C-terminal half is responsible for the 5' incision. The protein is UvrABC system protein C of Salinispora tropica (strain ATCC BAA-916 / DSM 44818 / JCM 13857 / NBRC 105044 / CNB-440).